Here is a 1077-residue protein sequence, read N- to C-terminus: ATP-dependent helicase/deoxyribonuclease subunit B (1077 aa).

It belongs to the helicase family. AddB/RexB type 2 subfamily. As to quaternary structure, heterodimer of AddA and RexB. Requires Mg(2+) as cofactor.

Functionally, the heterodimer acts as both an ATP-dependent DNA helicase and an ATP-dependent, dual-direction single-stranded exonuclease. Recognizes the chi site generating a DNA molecule suitable for the initiation of homologous recombination. This subunit has 5' -&gt; 3' nuclease activity but not helicase activity. This Streptococcus agalactiae serotype III (strain NEM316) protein is ATP-dependent helicase/deoxyribonuclease subunit B.